Consider the following 289-residue polypeptide: Thioredoxin-like protein 1 (289 aa).

The Thioredoxin domain maps to 2 to 109 (VGVKPVGSDP…EEKIKQHLEN (108 aa)). A disulfide bond links Cys-34 and Cys-37. Residue Ser-113 is modified to Phosphoserine. A PITH domain is found at 115–285 (EDTDIPKGYM…NDFKRVVGKK (171 aa)).

In terms of assembly, component of the 19S regulatory cap of the 26S proteasome. Interacts with PSMD14/RPN11. Interacts with, and reduces EEF1A1.

It is found in the cytoplasm. It localises to the nucleus. Functionally, active thioredoxin with a redox potential of about -250 mV. This Rattus norvegicus (Rat) protein is Thioredoxin-like protein 1 (Txnl1).